Consider the following 326-residue polypeptide: tRNA-modifying protein YgfZ (326 aa).

Residues Trp-27 and Trp-189 each contribute to the folate site.

The protein belongs to the tRNA-modifying YgfZ family.

It is found in the cytoplasm. Folate-binding protein involved in regulating the level of ATP-DnaA and in the modification of some tRNAs. It is probably a key factor in regulatory networks that act via tRNA modification, such as initiation of chromosomal replication. This Salmonella arizonae (strain ATCC BAA-731 / CDC346-86 / RSK2980) protein is tRNA-modifying protein YgfZ.